A 73-amino-acid chain; its full sequence is Cell division protein ZapB (73 aa).

The stretch at 3 to 66 (LELLSKLETK…SWNEKVTGLV (64 aa)) forms a coiled coil.

Belongs to the ZapB family. In terms of assembly, homodimer. The ends of the coiled-coil dimer bind to each other, forming polymers. Interacts with FtsZ.

It is found in the cytoplasm. Its function is as follows. Non-essential, abundant cell division factor that is required for proper Z-ring formation. It is recruited early to the divisome by direct interaction with FtsZ, stimulating Z-ring assembly and thereby promoting cell division earlier in the cell cycle. Its recruitment to the Z-ring requires functional FtsA or ZipA. This chain is Cell division protein ZapB, found in Shewanella baltica (strain OS223).